Consider the following 564-residue polypeptide: Beta-N-acetylglucosaminidase/beta-glucosidase (564 aa).

Asp-283 (nucleophile) is an active-site residue.

Belongs to the glycosyl hydrolase 3 family.

It catalyses the reaction Hydrolysis of terminal non-reducing N-acetyl-D-hexosamine residues in N-acetyl-beta-D-hexosaminides.. It carries out the reaction Hydrolysis of terminal, non-reducing beta-D-glucosyl residues with release of beta-D-glucose.. In terms of biological role, catalyzes the cleavage of beta-N-acetyl-D-glucosaminides and beta-D-glucosides. Might be involved in the degradation of glucuronic acid-containing glycosaminoglycans such as hyaluronic acid. The polypeptide is Beta-N-acetylglucosaminidase/beta-glucosidase (nag3) (Cellulomonas fimi).